Consider the following 444-residue polypeptide: Transcriptional regulatory protein GlrR (444 aa).

The Response regulatory domain occupies 7–121; that stretch reads HLLLVDDDPG…ALYQAIDDAL (115 aa). Position 56 is a 4-aspartylphosphate (Asp56). Positions 136-366 constitute a Sigma-54 factor interaction domain; sequence IVTRSPLMLR…VNVIEQCVAL (231 aa). ATP-binding positions include 164-171 and 227-236; these read GQSGTGKE and AEGGTLFLDE. Residues 414-433 constitute a DNA-binding region (H-T-H motif); that stretch reads VTHAARMAGRNRTEFYKLLS.

Post-translationally, phosphorylated by GlrK.

The protein resides in the cytoplasm. Functionally, member of the two-component regulatory system GlrR/GlrK that up-regulates transcription of the glmY sRNA when cells enter the stationary growth phase. Regulates glmY transcription by binding to three conserved sites in the purL-glmY intergenic region. In Escherichia coli (strain K12), this protein is Transcriptional regulatory protein GlrR (glrR).